A 554-amino-acid polypeptide reads, in one-letter code: Asparagine synthetase B [glutamine-hydrolyzing] (554 aa).

Residue Cys-2 is the For GATase activity of the active site. The Glutamine amidotransferase type-2 domain occupies 2-186; that stretch reads CSIFGVFDIK…AGSYLWSQDG (185 aa). L-glutamine-binding positions include 50–54, 75–77, and Asp-99; these read RLSIV and NGE. ATP is bound by residues Leu-233, Val-273, and 347-348; that span reads SG.

It belongs to the asparagine synthetase family. Homodimer.

It catalyses the reaction L-aspartate + L-glutamine + ATP + H2O = L-asparagine + L-glutamate + AMP + diphosphate + H(+). It participates in amino-acid biosynthesis; L-asparagine biosynthesis; L-asparagine from L-aspartate (L-Gln route): step 1/1. Glutamine-dependent asparagine synthesis activity can be inhibited by aspartic acid analogs (such as a sulfinate derivative and (2S,3R)-2-amino-3-methylsuccinate) in vitro; the inhibition is competitive with respect to aspartate. Catalyzes the ATP-dependent conversion of aspartate into asparagine, using glutamine as a source of nitrogen. Can also use ammonia as the nitrogen source in vitro, albeit with lower efficiency. As nucleotide substrates, ATP and dATP are utilized at a similar rate in both the glutamine- and ammonia-dependent reactions, whereas GTP utilization is only 15% that of ATP, and CTP, UTP, ITP and XTP are very poor or not substrates. Also exhibits glutaminase activity. This chain is Asparagine synthetase B [glutamine-hydrolyzing] (asnB), found in Escherichia coli (strain K12).